The following is a 109-amino-acid chain: Nucleoid-associated protein Cvib_1034 (109 aa).

Belongs to the YbaB/EbfC family. Homodimer.

The protein resides in the cytoplasm. It is found in the nucleoid. In terms of biological role, binds to DNA and alters its conformation. May be involved in regulation of gene expression, nucleoid organization and DNA protection. The protein is Nucleoid-associated protein Cvib_1034 of Chlorobium phaeovibrioides (strain DSM 265 / 1930) (Prosthecochloris vibrioformis (strain DSM 265)).